A 134-amino-acid polypeptide reads, in one-letter code: Ribosome-binding factor A (134 aa).

Positions 115–134 (EDQRQERGEIPPGSDELQPD) are disordered.

The protein belongs to the RbfA family. Monomer. Binds 30S ribosomal subunits, but not 50S ribosomal subunits or 70S ribosomes.

The protein localises to the cytoplasm. Functionally, one of several proteins that assist in the late maturation steps of the functional core of the 30S ribosomal subunit. Associates with free 30S ribosomal subunits (but not with 30S subunits that are part of 70S ribosomes or polysomes). Required for efficient processing of 16S rRNA. May interact with the 5'-terminal helix region of 16S rRNA. The chain is Ribosome-binding factor A from Synechococcus sp. (strain CC9902).